Reading from the N-terminus, the 336-residue chain is Dihydroorotate dehydrogenase (quinone) (336 aa).

Residues 62–66 (AGLDK) and Thr-86 each bind FMN. Residue Lys-66 participates in substrate binding. 111-115 (NRMGF) serves as a coordination point for substrate. FMN is bound by residues Asn-139 and Asn-172. Asn-172 contributes to the substrate binding site. Ser-175 serves as the catalytic Nucleophile. Residue Asn-177 coordinates substrate. Positions 217 and 245 each coordinate FMN. 246-247 (NT) lines the substrate pocket. FMN is bound by residues Gly-268, Gly-297, and 318–319 (YS).

This sequence belongs to the dihydroorotate dehydrogenase family. Type 2 subfamily. Monomer. FMN is required as a cofactor.

Its subcellular location is the cell membrane. The catalysed reaction is (S)-dihydroorotate + a quinone = orotate + a quinol. The protein operates within pyrimidine metabolism; UMP biosynthesis via de novo pathway; orotate from (S)-dihydroorotate (quinone route): step 1/1. Functionally, catalyzes the conversion of dihydroorotate to orotate with quinone as electron acceptor. The sequence is that of Dihydroorotate dehydrogenase (quinone) from Salmonella gallinarum (strain 287/91 / NCTC 13346).